The chain runs to 502 residues: Cytochrome P450 71B16 (502 aa).

Residues Met1–Lys21 form a helical membrane-spanning segment. Cys444 is a binding site for heme.

It belongs to the cytochrome P450 family. Heme is required as a cofactor.

Its subcellular location is the membrane. The protein is Cytochrome P450 71B16 (CYP71B16) of Arabidopsis thaliana (Mouse-ear cress).